Reading from the N-terminus, the 401-residue chain is Ribosomal protein uS12 methylthiotransferase RimO (401 aa).

Positions 1 to 108 (MKINFINLGC…GIELLQTPKR (108 aa)) constitute an MTTase N-terminal domain. Residues cysteine 10, cysteine 43, cysteine 72, cysteine 124, cysteine 128, and cysteine 131 each coordinate [4Fe-4S] cluster. In terms of domain architecture, Radical SAM core spans 110-339 (LTTKHYAYLK…FNLSQEILEE (230 aa)).

Belongs to the methylthiotransferase family. RimO subfamily. It depends on [4Fe-4S] cluster as a cofactor.

The protein resides in the cytoplasm. The catalysed reaction is L-aspartate(89)-[ribosomal protein uS12]-hydrogen + (sulfur carrier)-SH + AH2 + 2 S-adenosyl-L-methionine = 3-methylsulfanyl-L-aspartate(89)-[ribosomal protein uS12]-hydrogen + (sulfur carrier)-H + 5'-deoxyadenosine + L-methionine + A + S-adenosyl-L-homocysteine + 2 H(+). Catalyzes the methylthiolation of an aspartic acid residue of ribosomal protein uS12. In Hydrogenobaculum sp. (strain Y04AAS1), this protein is Ribosomal protein uS12 methylthiotransferase RimO.